A 677-amino-acid polypeptide reads, in one-letter code: uncharacterized protein (677 aa).

3 consecutive transmembrane segments (helical) span residues 80-102 (ILSL…RASF), 338-360 (ALLS…LFGF), and 367-386 (LVAM…LLSL). The interval 523 to 556 (DEAASLPSDSSPEEDLDPLEEVESIEGTAEESTR) is disordered. Over residues 533–546 (SPEEDLDPLEEVES) the composition is skewed to acidic residues.

Its subcellular location is the cell membrane. This is an uncharacterized protein from Treponema pallidum (strain Nichols).